The sequence spans 334 residues: Holliday junction branch migration complex subunit RuvB (334 aa).

The large ATPase domain (RuvB-L) stretch occupies residues 1–179; it reads MTHKISVLHQ…FAFTGRVDYY (179 aa). ATP is bound by residues leucine 18, arginine 19, glycine 60, lysine 63, threonine 64, serine 65, 126–128, arginine 169, tyrosine 179, and arginine 216; that span reads EDF. Residue threonine 64 coordinates Mg(2+). Residues 180-250 are small ATPAse domain (RuvB-S); that stretch reads TDEDLVSILS…VAEKALAMLL (71 aa). The tract at residues 253-334 is head domain (RuvB-H); sequence NLGLNEIDIK…RNPKDRWGEE (82 aa). The DNA site is built by arginine 308 and arginine 313.

The protein belongs to the RuvB family. As to quaternary structure, homohexamer. Forms an RuvA(8)-RuvB(12)-Holliday junction (HJ) complex. HJ DNA is sandwiched between 2 RuvA tetramers; dsDNA enters through RuvA and exits via RuvB. An RuvB hexamer assembles on each DNA strand where it exits the tetramer. Each RuvB hexamer is contacted by two RuvA subunits (via domain III) on 2 adjacent RuvB subunits; this complex drives branch migration. In the full resolvosome a probable DNA-RuvA(4)-RuvB(12)-RuvC(2) complex forms which resolves the HJ.

It localises to the cytoplasm. It catalyses the reaction ATP + H2O = ADP + phosphate + H(+). Functionally, the RuvA-RuvB-RuvC complex processes Holliday junction (HJ) DNA during genetic recombination and DNA repair, while the RuvA-RuvB complex plays an important role in the rescue of blocked DNA replication forks via replication fork reversal (RFR). RuvA specifically binds to HJ cruciform DNA, conferring on it an open structure. The RuvB hexamer acts as an ATP-dependent pump, pulling dsDNA into and through the RuvAB complex. RuvB forms 2 homohexamers on either side of HJ DNA bound by 1 or 2 RuvA tetramers; 4 subunits per hexamer contact DNA at a time. Coordinated motions by a converter formed by DNA-disengaged RuvB subunits stimulates ATP hydrolysis and nucleotide exchange. Immobilization of the converter enables RuvB to convert the ATP-contained energy into a lever motion, pulling 2 nucleotides of DNA out of the RuvA tetramer per ATP hydrolyzed, thus driving DNA branch migration. The RuvB motors rotate together with the DNA substrate, which together with the progressing nucleotide cycle form the mechanistic basis for DNA recombination by continuous HJ branch migration. Branch migration allows RuvC to scan DNA until it finds its consensus sequence, where it cleaves and resolves cruciform DNA. This Chlamydia trachomatis serovar A (strain ATCC VR-571B / DSM 19440 / HAR-13) protein is Holliday junction branch migration complex subunit RuvB.